The following is a 3790-amino-acid chain: Transcription-associated protein 1 (3790 aa).

HEAT repeat units follow at residues 98 to 136, 335 to 381, 740 to 778, 1185 to 1223, 1332 to 1370, and 1826 to 1864; these read RQHV…HFRP, TDLR…HVRQ, DLLY…ELCL, AKAT…IQSK, IGYK…GVTL, and AIHK…AMPL. The 564-residue stretch at 2610 to 3173 folds into the FAT domain; that stretch reads LLAYLGKSHN…YFPIRTLYLT (564 aa). The PI3K/PI4K catalytic domain occupies 3429–3753; it reads MPRVEIVQKN…AVDIIMTRFN (325 aa). The segment at 3435–3441 is G-loop; that stretch reads VQKNNTA. The interval 3616 to 3624 is catalytic loop; that stretch reads NLTRLNADM. Residues 3636 to 3661 form an activation loop region; the sequence is ISYFKFDVNDDKCQLNQHRPVPFRLT. Residues 3758-3790 form the FATC domain; the sequence is FDSIENKKISVLVQSATNIDNLCRMDPAWHPWL.

This sequence belongs to the PI3/PI4-kinase family. TRA1 subfamily. Component of the Tip60 chromatin-remodeling complex which contains the catalytic subunit Tip60 and the subunits Domino, Tra1, Brd8, E(Pc), DMAP1, Pontin, Reptin, Ing3, Act87E, BAP55, Mrg15, MrgBP, Gas41 and YL-1. Probable component of some SAGA complex. Interacts with Spt3, Gcn5, Ada3 and Ada2b. In terms of tissue distribution, ubiquitous.

Its subcellular location is the nucleus. The protein resides in the cytoplasm. It is found in the chromosome. Part of the Tip60 chromatin-remodeling complex which is involved in DNA repair. Upon induction of DNA double-strand breaks, this complex acetylates phosphorylated H2AV in nucleosomes and exchanges it with unmodified H2AV. During wing development, required for activity of Notch and its coactivator mam. Function in promoting mam function is likely to involve both the Tip60 and SAGA complexes. The chain is Transcription-associated protein 1 (Nipped-A) from Drosophila melanogaster (Fruit fly).